The sequence spans 520 residues: Maturase K (520 aa).

It belongs to the intron maturase 2 family. MatK subfamily.

It localises to the plastid. The protein localises to the chloroplast. Its function is as follows. Usually encoded in the trnK tRNA gene intron. Probably assists in splicing its own and other chloroplast group II introns. This Linum perenne (Perennial flax) protein is Maturase K.